Reading from the N-terminus, the 187-residue chain is MDFYSLIFLSCALGMDAFAVSLCKGFSVKKLHLKHYLIVGIYFGGFQALMPTIGYFIGITFASFIASIDHWIAFILLSLIGLKMIKESLENENCDSNANQFGFKTMLALAIATSIDALAVGVSFAFLNVNLLLAIFLIGIITFILCIIALKIGNKFGIYLKNKAELLGGLVLIILGVKILIEHLFFD.

Transmembrane regions (helical) follow at residues 3–23 (FYSLIFLSCALGMDAFAVSLC), 35–55 (HYLIVGIYFGGFQALMPTIGY), 56–76 (FIGITFASFIASIDHWIAFIL), 107–127 (LALAIATSIDALAVGVSFAFL), 129–149 (VNLLLAIFLIGIITFILCIIA), and 166–186 (LLGGLVLIILGVKILIEHLFF).

The protein belongs to the MntP (TC 9.B.29) family.

The protein resides in the cell inner membrane. Probably functions as a manganese efflux pump. The protein is Putative manganese efflux pump MntP of Campylobacter jejuni (strain RM1221).